A 231-amino-acid chain; its full sequence is Lipoprotein-releasing system ATP-binding protein LolD (231 aa).

The ABC transporter domain occupies 11 to 231 (LRLEGLTRRF…TLRDGKLVPF (221 aa)). 47 to 54 (APSGTGKS) serves as a coordination point for ATP.

Belongs to the ABC transporter superfamily. Lipoprotein translocase (TC 3.A.1.125) family. In terms of assembly, the complex is composed of two ATP-binding proteins (LolD) and two transmembrane proteins (LolC and LolE).

It is found in the cell inner membrane. In terms of biological role, part of the ABC transporter complex LolCDE involved in the translocation of mature outer membrane-directed lipoproteins, from the inner membrane to the periplasmic chaperone, LolA. Responsible for the formation of the LolA-lipoprotein complex in an ATP-dependent manner. The polypeptide is Lipoprotein-releasing system ATP-binding protein LolD (Gluconobacter oxydans (strain 621H) (Gluconobacter suboxydans)).